Consider the following 133-residue polypeptide: CDGSH iron-sulfur domain-containing protein 2 homolog (133 aa).

Over 1–35 the chain is Lumenal; sequence MEPISHLVKSSLPNYLSSLPIPDSVGGWFKLSFKD. The chain crosses the membrane as a helical span at residues 36–58; the sequence is WLALIPPTVVVAGIGYTAYLAYC. At 59 to 133 the chain is on the cytoplasmic side; that stretch reads PAAKAICSAK…DNVGPIVIKK (75 aa). Positions 100, 102, 111, and 115 each coordinate [2Fe-2S] cluster.

The protein belongs to the CISD protein family. CISD2 subfamily. The cofactor is [2Fe-2S] cluster.

The protein localises to the endoplasmic reticulum membrane. The sequence is that of CDGSH iron-sulfur domain-containing protein 2 homolog from Drosophila yakuba (Fruit fly).